The sequence spans 642 residues: Voltage-gated potassium channel KCNC2 (642 aa).

Residues 1-233 are Cytoplasmic-facing; sequence MGKIESNERV…EDPYSSRAAR (233 aa). Positions 45-98 are disordered; the sequence is DCLTAAGDKLQPLPPPLSPPPRPPPLSPVPSGCFEGGAGNCSSHGGNGGNGGSD. Pro residues predominate over residues 56–72; sequence PLPPPLSPPPRPPPLSP. The segment covering 78 to 98 has biased composition (gly residues); the sequence is FEGGAGNCSSHGGNGGNGGSD. Zn(2+) contacts are provided by His-128, Cys-134, Cys-155, and Cys-156. The helical transmembrane segment at 234-254 threads the bilayer; that stretch reads FIAFASLFFILVSITTFCLET. Asn-263 and Asn-270 each carry an N-linked (GlcNAc...) asparagine glycan. The chain crosses the membrane as a helical span at residues 287 to 307; the sequence is TYVEGVCVVWFTFEFLVRIVF. Residues 308 to 317 lie on the Cytoplasmic side of the membrane; sequence SPNKLEFIKN. Residues 318–338 form a helical membrane-spanning segment; the sequence is LLNIIDFVAILPFYLEVGLSG. Residues 350 to 372 form a helical; Voltage-sensor membrane-spanning segment; sequence FLRVVRFVRILRIFKLTRHFVGL. The Cytoplasmic segment spans residues 373–385; the sequence is RVLGHTLRASTNE. The helical transmembrane segment at 386 to 406 threads the bilayer; it reads FLLLIIFLALGVLIFATMIYY. The K(+) site is built by Thr-441, Leu-442, Gly-443, and Tyr-444. The short motif at 441-446 is the Selectivity filter element; it reads TLGYGD. A helical transmembrane segment spans residues 457–477; that stretch reads VGALCALAGVLTIAMPVPVIV. Residues 478–642 lie on the Cytoplasmic side of the membrane; sequence NNFGMYYSLA…RSRSPIPSIL (165 aa). A disordered region spans residues 542 to 576; sequence SVLSGDDSTGSEPPLSPPERLPIRRSSTRDKNRRG. Position 604 is a phosphoserine (Ser-604).

This sequence belongs to the potassium channel family. C (Shaw) (TC 1.A.1.2) subfamily. Kv3.2/KCNC2 sub-subfamily. As to quaternary structure, homotetramer and heterotetramer with other channel-forming alpha subunits, such as KCNC1. Interacts with KCNC1. Homotetramer or heterotetramer channel activity is regulated by association with modulating ancillary subunits such as KCNE1, KCNE2 and KCNE3, creating a functionally diverse range of channel complexes. Interacts with KCNE1, KCNE2 and KCNE3. In terms of processing, phosphorylated by PKA in cortical synaptosomes. cAMP-dependent phosphorylation inhibits channel activity. Histamine H2 receptor- and PKA-induced phosphorylation extends action potential spike duration, reduces action potential spike amplitude, sustains maximum firing frequency in hippocampal interneurons; also reduces the incidence of high-frequency oscillations in hippocampal CA3 pyramidal cell layers. Weakly expressed in the brain at postnatal age day 7 (P7) and increased at P60. Not detectable in newborn hippocampus. Expressed weakly at P7 in the early developing hippocampus, increasing progressively and reaching a plateau of expression at P14 that is maintained throughout P51. Expressed in paravalbumin- and somatostain-containing inhibitory interneurons of the hippocampus; in the CA1/CA3 stratum oriens-alveus and stratum pyramidale and in cells within the hilus and subgranular layer of the dentate gyrus (DG). Strongly expressed in parvalbumin (PV)-containing fast-spiking GABAergic inhibitor interneurons in deep cortical layers V and VI. Also expressed in non-fast-spiking calbindin (CB)- and/or somatostatin (SOM)-containing interneurons in deep cortical layers V and VI. Expressed in starburst amacrine cells of the retina in the inner nuclear layer (INL) and ganglion cell layer (GCL). Expressed in the suprachiasmatic nucleus (SCN) (at protein level). Expressed in the early developing brain, increasing progressively until P14.

It is found in the cell membrane. It localises to the membrane. The protein resides in the perikaryon. The protein localises to the cell projection. Its subcellular location is the axon. It is found in the dendrite. It localises to the postsynaptic cell membrane. The protein resides in the presynaptic cell membrane. The protein localises to the synapse. Its subcellular location is the synaptosome. It is found in the apical cell membrane. It localises to the basolateral cell membrane. The catalysed reaction is K(+)(in) = K(+)(out). With respect to regulation, inhibited by millimolar levels of tetraethylammonium (TEA). Contrary to other channels, inhibited only by millimolar levels of 4-aminopyridine (4-AP). Inhibited by Stichodactyla helianthus peptide ShK. In terms of biological role, voltage-gated potassium channel that mediates transmembrane potassium transport in excitable membranes, primarily in the brain. Contributes to the regulation of the fast action potential repolarization and in sustained high-frequency firing in neurons of the central nervous system. Homotetramer channels mediate delayed-rectifier voltage-dependent potassium currents that activate rapidly at high-threshold voltages and inactivate slowly. Forms tetrameric channels through which potassium ions pass in accordance with their electrochemical gradient. The channel alternates between opened and closed conformations in response to the voltage difference across the membrane. Can form functional homotetrameric and heterotetrameric channels that contain variable proportions of KCNC1, and possibly other family members as well; channel properties depend on the type of alpha subunits that are part of the channel. Channel properties may be modulated by either the association with ancillary subunits, such as KCNE1, KCNE2 and KCNE3 or indirectly by nitric oxide (NO) through a cGMP- and PKG-mediated signaling cascade, slowing channel activation and deactivation of delayed rectifier potassium channels. Contributes to fire sustained trains of very brief action potentials at high frequency in thalamocortical and suprachiasmatic nucleus (SCN) neurons, in hippocampal and neocortical interneurons and in retinal ganglion cells. Sustained maximal action potential firing frequency in inhibitory hippocampal interneurons is negatively modulated by histamine H2 receptor activation in a cAMP- and protein kinase (PKA) phosphorylation-dependent manner. Plays a role in maintaining the fidelity of synaptic transmission in neocortical GABAergic interneurons by generating action potential (AP) repolarization at nerve terminals, thus reducing spike-evoked calcium influx and GABA neurotransmitter release. Required for long-range synchronization of gamma oscillations over distance in the neocortex. Contributes to the modulation of the circadian rhythm of spontaneous action potential firing in suprachiasmatic nucleus (SCN) neurons in a light-dependent manner. The chain is Voltage-gated potassium channel KCNC2 from Mus musculus (Mouse).